A 130-amino-acid chain; its full sequence is Cytochrome c-type biogenesis protein CcmE (130 aa).

The Cytoplasmic portion of the chain corresponds to 1-7; it reads MKKKHKR. The helical; Signal-anchor for type II membrane protein transmembrane segment at 8–28 threads the bilayer; the sequence is LLITSGIFCFLSCAVFFILTT. The Extracellular segment spans residues 29–130; that stretch reads LKENISFFYT…DENYKPKVLK (102 aa). 2 residues coordinate heme: H120 and Y124.

The protein belongs to the CcmE/CycJ family.

The protein resides in the cell membrane. In terms of biological role, heme chaperone required for the biogenesis of c-type cytochromes. Transiently binds heme delivered by CcmC and transfers the heme to apo-cytochromes in a process facilitated by CcmF and CcmH. In Wolbachia pipientis subsp. Culex pipiens (strain wPip), this protein is Cytochrome c-type biogenesis protein CcmE.